The chain runs to 545 residues: Cytochrome bc1 complex cytochrome b subunit (545 aa).

The chain crosses the membrane as a helical span at residues 54–74; that stretch reads VCLYSFIIIILTGVYLTLFFH. 2 residues coordinate heme: His118 and His132. The next 3 membrane-spanning stretches (helical) occupy residues 122–142, 150–170, and 182–202; these read ALIF…TGAF, WLFG…GYSL, and FMEG…FFLF. Heme-binding residues include His219 and His234. 5 helical membrane-spanning segments follow: residues 220–240, 269–289, 335–355, 385–405, and 413–433; these read ILLL…LVFY, AGGF…IATI, LVLG…AIAV, FGVA…NDLW, and INAI…VAFI.

It belongs to the cytochrome b family. The cytochrome bc1 complex is composed of a cytochrome b (QcrB), the Rieske iron-sulfur protein (QcrA) and a diheme cytochrome c (QcrC) subunit. The cofactor is heme.

It is found in the cell membrane. It catalyses the reaction a quinol + 2 Fe(III)-[cytochrome c](out) = a quinone + 2 Fe(II)-[cytochrome c](out) + 2 H(+)(out). Cytochrome b subunit of the cytochrome bc1 complex, an essential component of the respiratory electron transport chain required for ATP synthesis. The bc1 complex catalyzes the oxidation of ubiquinol and the reduction of cytochrome c in the respiratory chain. The bc1 complex operates through a Q-cycle mechanism that couples electron transfer to generation of the proton gradient that drives ATP synthesis. The cytochrome b subunit contains two ubiquinol reactive sites: the oxidation (QP) site and the reduction (QN) site. This is Cytochrome bc1 complex cytochrome b subunit (qcrB) from Streptomyces coelicolor (strain ATCC BAA-471 / A3(2) / M145).